A 118-amino-acid polypeptide reads, in one-letter code: Large ribosomal subunit protein bL20 (118 aa).

Belongs to the bacterial ribosomal protein bL20 family.

Functionally, binds directly to 23S ribosomal RNA and is necessary for the in vitro assembly process of the 50S ribosomal subunit. It is not involved in the protein synthesizing functions of that subunit. The polypeptide is Large ribosomal subunit protein bL20 (Francisella tularensis subsp. tularensis (strain FSC 198)).